The primary structure comprises 360 residues: Probable cinnamyl alcohol dehydrogenase 9 (360 aa).

C50 is a Zn(2+) binding site. Residue T52 participates in NADP(+) binding. Zn(2+)-binding residues include H72, E73, C103, C106, C109, C117, and C166. NADP(+) is bound by residues T170, 191 to 196, 214 to 219, T254, G278, and 301 to 303; these read GLGGLG, SSSSTK, and SDV.

This sequence belongs to the zinc-containing alcohol dehydrogenase family. Homodimer. Requires Zn(2+) as cofactor. In terms of tissue distribution, expressed in the vasculature of the primary root and elongation regions. Expressed in the hypocotyl, cotyledon veins, vasculature of the first rosette leaves, and hydathodes. In stems, expressed in the vascular cambium, interfascicular cambium, developing xylem, and phloem. Expressed in the entire floral organs at late developing stage, and in the abscission, style and stigmatic regions of siliques and seed funicules.

The catalysed reaction is (E)-cinnamyl alcohol + NADP(+) = (E)-cinnamaldehyde + NADPH + H(+). It functions in the pathway aromatic compound metabolism; phenylpropanoid biosynthesis. Functionally, involved in lignin biosynthesis. May catalyze the final step specific for the production of lignin monomers, like coniferyl alcohol, sinapyl alcohol and 4-coumaryl alcohol. This is Probable cinnamyl alcohol dehydrogenase 9 (CAD9) from Arabidopsis thaliana (Mouse-ear cress).